The following is a 412-amino-acid chain: Glucose-1-phosphate adenylyltransferase (412 aa).

Alpha-D-glucose 1-phosphate contacts are provided by residues Tyr-98, Gly-163, 178–179 (EK), and Ser-189.

Belongs to the bacterial/plant glucose-1-phosphate adenylyltransferase family. Homotetramer.

The enzyme catalyses alpha-D-glucose 1-phosphate + ATP + H(+) = ADP-alpha-D-glucose + diphosphate. It functions in the pathway glycan biosynthesis; glycogen biosynthesis. Involved in the biosynthesis of ADP-glucose, a building block required for the elongation reactions to produce glycogen. Catalyzes the reaction between ATP and alpha-D-glucose 1-phosphate (G1P) to produce pyrophosphate and ADP-Glc. This Thermosipho melanesiensis (strain DSM 12029 / CIP 104789 / BI429) protein is Glucose-1-phosphate adenylyltransferase.